We begin with the raw amino-acid sequence, 477 residues long: MMEIAYQPRIDSEIESLVERINPPRVCVDNDSDPECTLIKVDSANKYGILLDMVQVLADLDLVISKCYISSDGEWFMDVFHVTDQLGNKLTDRSLILYIQQAICSSRTGGITKEMQSNLKREVQQRHVSTEHTAFEITGINRPGLLSEISAVLSDIGCHVTAAVAWTHHERAAMVIYLEDGFNGGPIIDPIRKAQVKDHLDTVMEAHHIVGDVSHVVVRVVEAKGVPVGWAHTERRLHELMYGEGDYENCFDCDCFGDRCDALWRGRCERIHVTIEACNGYSMVNVKCRDRPKLLFDTVCALKELQFVVFHAVAGAKGSTAEQEYFIRKKNGGTLETEGQRERLRHCLVAAISRRASQGLKLEIRTENKMGLLSDVTRVVRENGLSITRAEMCTQGEIAVGSFYVTDVNGGETGPSEVEAVVRELGGAVVSAVKGVGMMPRRIGSTSDSVEQDKAKSSIGRMFWSKLERLSTSIRSL.

4 consecutive ACT domains span residues 38–124 (LIKV…REVQ), 134–214 (AFEI…GDVS), 283–358 (MVNV…RASQ), and 361–441 (KLEI…MMPR). The Bipartite nuclear localization signal signature appears at 329–345 (KKNGGTLETEGQRERLR).

As to expression, expressed in flowers and siliques.

The protein resides in the nucleus. Functionally, may bind amino acids. The chain is ACT domain-containing protein ACR1 from Arabidopsis thaliana (Mouse-ear cress).